The following is a 480-amino-acid chain: MDQEESHVISIFETFGAYFINIFYNFLYKNALYKKHSIVMEYQYQVKGYILGVKQNKKLYEKMLDSFYKYFCNITQINSKTLSFSNFVSTIVDSFLPKEYSQSISLEKKDSILELLLCDYISNLGTFITTEKMLPFIVKNRKENYHRITKEMQDYSLTFLLKKRMELYNKFLRKQAYVEPKTELEETYTRLSSYNRSLLYQIEELTSEKKSLLAELSTLRKKYEKRQSEYRRLVQLLYQQIQRSSSSKNSYPLTKFIETLPSEHFSNEDYQKEAPRDQKQVETELLKQQEELLASQELTSKSPSNYPVPQSRTIVSKPSDNYPVPQSRSSKIDFDNSLQNQELNVKNGFSGKTILELNQDNPEIEEDILEFNQDNPEIEEDILEFNQDNPEIEEDILKFNQDNPEIEEDILKLNQDNPEIEEEVILEKENHKEDEPIVQNPFLENFWKPEQKTFNQSGLFEESSDFSNDWSGGDVTLNFS.

A helical transmembrane segment spans residues 7 to 28 (HVISIFETFGAYFINIFYNFLY). Asparagine 73 and asparagine 195 each carry an N-linked (GlcNAc...) asparagine; by host glycan. Residues 195-235 (NRSLLYQIEELTSEKKSLLAELSTLRKKYEKRQSEYRRLVQ) adopt a coiled-coil conformation. The tract at residues 297 to 332 (ELTSKSPSNYPVPQSRTIVSKPSDNYPVPQSRSSKI) is disordered. The segment covering 301–329 (KSPSNYPVPQSRTIVSKPSDNYPVPQSRS) has biased composition (polar residues). The N-linked (GlcNAc...) asparagine; by host glycan is linked to asparagine 455.

Belongs to the asfivirus B475L family.

The protein resides in the host membrane. This is an uncharacterized protein from African swine fever virus (isolate Pig/Kenya/KEN-50/1950) (ASFV).